The primary structure comprises 249 residues: Early E1A protein (249 aa).

The interaction with RB1 in competition with E2F1 stretch occupies residues 38–46 (MSLHDLFDV). An interaction with UBE2I region spans residues 74-131 (SAAESGSGDSGVGEELLPVDLDLKCYEDGLPPSDPETDEATEAEEEAAMPTYVNENEN). The LXCXE motif, interaction with host RB1 and TMEM173/STING motif lies at 96–100 (LKCYE). Residues 145–165 (CRACDFHRGTSGNPEAMCALC) fold into a zinc finger. Positions 180 to 203 (DAEGESESGSPEDTDFPHPLTATP) are disordered. Residues 181-193 (AEGESESGSPEDT) are compositionally biased toward acidic residues. The PXDLS motif, CTBP-binding motif lies at 238-242 (PLNLS). The Nuclear localization signal motif lies at 244-248 (KRPKC).

This sequence belongs to the adenoviridae E1A protein family. In terms of assembly, interacts with host UBE2I; this interaction interferes with polySUMOylation. Interacts with host RB1; this interaction induces the aberrant dissociation of RB1-E2F1 complex thereby disrupting the activity of RB1 and activating E2F1-regulated genes. Interacts with host ATF7; the interaction enhances ATF7-mediated viral transactivation activity which requires the zinc binding domains of both proteins. Isoform early E1A 32 kDa protein and isoform early E1A 26 kDa protein interact (via N-terminus) with CUL1 and E3 ubiquitin ligase RBX1; these interactions inhibit RBX1-CUL1-dependent elongation reaction of ubiquitin chains and attenuate ubiquitination of SCF(FBXW7) target proteins. Interacts (via PXLXP motif) with host ZMYND11/BS69 (via MYND-type zinc finger); this interaction inhibits E1A mediated transactivation. Interacts with host EP300; this interaction stimulates the acetylation of RB1 by recruiting EP300 and RB1 into a multimeric-protein complex. Interacts with host CTBP1 and CTBP2; this interaction seems to potentiate viral replication. Interacts with host DCAF7. Interacts with host DYRK1A. Interacts with host KPNA4; this interaction allows E1A import into the host nucleus. Interacts with host EP400; this interaction stabilizes MYC. Interacts with host TBP protein; this interaction probably disrupts the TBP-TATA complex. Interacts (via LXCXE motif) with host TMEM173/STING; this interaction impairs the ability of TMEM173/STING to sense cytosolic DNA and promote the production of type I interferon (IFN-alpha and IFN-beta). Interacts (via C-terminus) with host ZBED1/hDREF (via C-terminus); the interaction is direct.

It localises to the host nucleus. Functionally, plays a role in viral genome replication by driving entry of quiescent cells into the cell cycle. Stimulation of progression from G1 to S phase allows the virus to efficiently use the cellular DNA replicating machinery to achieve viral genome replication. E1A protein has both transforming and trans-activating activities. Induces the disassembly of the E2F1 transcription factor from RB1 by direct competition for the same binding site on RB1, with subsequent transcriptional activation of E2F1-regulated S-phase genes and of the E2 region of the adenoviral genome. Release of E2F1 leads to the ARF-mediated inhibition of MDM2 and causes TP53/p53 to accumulate because it is not targeted for degradation by MDM2-mediated ubiquitination anymore. This increase in TP53, in turn, would arrest the cell proliferation and direct its death but this effect is counteracted by the viral protein E1B-55K. Inactivation of the ability of RB1 to arrest the cell cycle is critical for cellular transformation, uncontrolled cellular growth and proliferation induced by viral infection. Interaction with RBX1 and CUL1 inhibits ubiquitination of the proteins targeted by SCF(FBXW7) ubiquitin ligase complex, and may be linked to unregulated host cell proliferation. The tumorigenesis-restraining activity of E1A may be related to the disruption of the host CtBP-CtIP complex through the CtBP binding motif. Interaction with host TMEM173/STING impairs the ability of TMEM173/STING to sense cytosolic DNA and promote the production of type I interferon (IFN-alpha and IFN-beta). Promotes the sumoylation of host ZBED1/hDREF with SUMO1. The protein is Early E1A protein of Homo sapiens (Human).